The chain runs to 388 residues: UDP-galactose transporter senju (388 aa).

Transmembrane regions (helical) follow at residues 13 to 33 (LTFV…IFVT), 46 to 66 (TVTV…CLYC), 84 to 104 (VLGL…LAFV), 113 to 133 (TYYL…QIIF), 142 to 162 (WISL…FGSF), 202 to 222 (FSLS…AGVY), 236 to 256 (IFVQ…VILL), 276 to 296 (FSVL…SFFL), 309 to 329 (ALEL…PIYM), and 331 to 351 (TALA…SPVV).

The protein belongs to the nucleotide-sugar transporter family.

It is found in the golgi apparatus membrane. In terms of biological role, UDP-galactose transporter involved in the synthesis of galactose-containing glycans. Plays a role in quiescence of the innate immune response, possibly by regulating glycosylation of the Toll pathway ligand spz. This Drosophila melanogaster (Fruit fly) protein is UDP-galactose transporter senju.